The primary structure comprises 448 residues: Exodeoxyribonuclease 7 large subunit (448 aa).

This sequence belongs to the XseA family. In terms of assembly, heterooligomer composed of large and small subunits.

It localises to the cytoplasm. It catalyses the reaction Exonucleolytic cleavage in either 5'- to 3'- or 3'- to 5'-direction to yield nucleoside 5'-phosphates.. In terms of biological role, bidirectionally degrades single-stranded DNA into large acid-insoluble oligonucleotides, which are then degraded further into small acid-soluble oligonucleotides. This is Exodeoxyribonuclease 7 large subunit from Enterococcus faecalis (strain ATCC 700802 / V583).